A 570-amino-acid polypeptide reads, in one-letter code: Proline--tRNA ligase (570 aa).

Belongs to the class-II aminoacyl-tRNA synthetase family. ProS type 1 subfamily. As to quaternary structure, homodimer.

The protein localises to the cytoplasm. It catalyses the reaction tRNA(Pro) + L-proline + ATP = L-prolyl-tRNA(Pro) + AMP + diphosphate. Functionally, catalyzes the attachment of proline to tRNA(Pro) in a two-step reaction: proline is first activated by ATP to form Pro-AMP and then transferred to the acceptor end of tRNA(Pro). As ProRS can inadvertently accommodate and process non-cognate amino acids such as alanine and cysteine, to avoid such errors it has two additional distinct editing activities against alanine. One activity is designated as 'pretransfer' editing and involves the tRNA(Pro)-independent hydrolysis of activated Ala-AMP. The other activity is designated 'posttransfer' editing and involves deacylation of mischarged Ala-tRNA(Pro). The misacylated Cys-tRNA(Pro) is not edited by ProRS. The polypeptide is Proline--tRNA ligase (Neisseria meningitidis serogroup A / serotype 4A (strain DSM 15465 / Z2491)).